Reading from the N-terminus, the 372-residue chain is L-selectin (372 aa).

The signal sequence occupies residues 1–28; the sequence is MVFPWRCEGTYWGSRNILKLWVWTLLCC. Residues 29-38 constitute a propeptide that is removed on maturation; sequence DFLIHHGTHC. Over 39–332 the chain is Extracellular; that stretch reads WTYHYSEKPM…FSKIKEGDYN (294 aa). The region spanning 55–155 is the C-type lectin domain; sequence KFCKQNYTDL…ACHKRKAALC (101 aa). 10 cysteine pairs are disulfide-bonded: C57-C155, C128-C147, C128-C160, C160-C171, C165-C180, C182-C191, C197-C241, C227-C254, C259-C303, and C289-C316. 2 N-linked (GlcNAc...) asparagine glycosylation sites follow: N60 and N104. E118, N120, E126, N143, and D144 together coordinate Ca(2+). The EGF-like domain maps to 156–192; it reads YTASCQPGSCNGRGECVETINNHTCICDAGYYGPQCQ. Residue N177 is glycosylated (N-linked (GlcNAc...) asparagine). Sushi domains are found at residues 195–256 and 257–318; these read VQCE…ICQV and VQCE…ICQE. 7 N-linked (GlcNAc...) asparagine glycosylation sites follow: N216, N226, N246, N278, N288, N308, and N320. The chain crosses the membrane as a helical span at residues 333-355; it reads PLFIPVAVMVTAFSGLAFLIWLA. Residues 356-372 are Cytoplasmic-facing; sequence RRLKKGKKSQERMDDPY.

It belongs to the selectin/LECAM family. In terms of assembly, interaction with SELPLG/PSGL1 and PODXL2 is required for promoting recruitment and rolling of leukocytes. This interaction is dependent on the sialyl Lewis X glycan modification of SELPLG and PODXL2, and tyrosine sulfation modifications of SELPLG. Sulfation on 'Tyr-51' of SELPLG is important for L-selectin binding. N-glycosylated. Predominantly expressed in lymphoid tissue.

The protein resides in the cell membrane. Functionally, calcium-dependent lectin that mediates cell adhesion by binding to glycoproteins on neighboring cells. Mediates the adherence of lymphocytes to endothelial cells of high endothelial venules in peripheral lymph nodes. Promotes initial tethering and rolling of leukocytes in endothelia. The sequence is that of L-selectin (Sell) from Mus musculus (Mouse).